The following is a 254-amino-acid chain: Putative epimerase LsrE (254 aa).

A helical transmembrane segment spans residues 14–34 (VALLASYPLSVGILAGQWIAL). Residues His-50, Asp-52, and His-81 each coordinate a divalent metal cation. The active-site Proton acceptor is Asp-52. Substrate contacts are provided by residues His-81, 166–169 (GYGS), 199–201 (DGS), and 221–222 (GS). Position 199 (Asp-199) interacts with a divalent metal cation. Catalysis depends on Asp-199, which acts as the Proton donor.

The protein belongs to the ribulose-phosphate 3-epimerase family. It depends on a divalent metal cation as a cofactor.

Its subcellular location is the cell membrane. The protein is Putative epimerase LsrE (lsrE) of Salmonella paratyphi A (strain ATCC 9150 / SARB42).